Reading from the N-terminus, the 423-residue chain is Protein disulfide isomerase-like 5-2 (423 aa).

Positions 1–35 (MAATTTRPLPLLLLLLLPPLLLLLLSFHAAAAAAA) are cleaved as a signal peptide. The region spanning 36–149 (EEFPRDGRVI…LVRNLNKFVA (114 aa)) is the Thioredoxin domain. Active-site nucleophile residues include C71 and C74. A disulfide bridge links C71 with C74. N181 carries N-linked (GlcNAc...) asparagine glycosylation. The helical transmembrane segment at 386–406 (LVSLNSLYILICVFALLGVMI) threads the bilayer.

It belongs to the protein disulfide isomerase family.

The protein localises to the membrane. Functionally, acts as a protein-folding catalyst that interacts with nascent polypeptides to catalyze the formation, isomerization, and reduction or oxidation of disulfide bonds. May play a role in storage protein biogenesis. The sequence is that of Protein disulfide isomerase-like 5-2 (PDIL5-2) from Oryza sativa subsp. japonica (Rice).